Reading from the N-terminus, the 410-residue chain is UBX domain-containing protein 3 (410 aa).

2 disordered regions span residues 46-139 and 154-212; these read EEDH…PDPK and TISP…EKPL. The segment covering 65–85 has biased composition (low complexity); the sequence is GSSSGISGGDQQPPRPLQRQQ. A compositionally biased stretch (polar residues) spans 86 to 97; the sequence is NTQGQGMKSGTA. A phosphoserine mark is found at S156, S167, and S186. Over residues 163–174 the composition is skewed to low complexity; the sequence is SGPSSLASSWAS. Polar residues predominate over residues 183 to 196; it reads NEASGSTTPVTQSG. The residue at position 190 (T190) is a Phosphothreonine. The SEP domain maps to 211–276; that stretch reads PLRRTLYFWR…VQHRMDEDYV (66 aa). The region spanning 334 to 410 is the UBX domain; it reads ENKPTTRIQV…KNASLVQKSL (77 aa).

As to quaternary structure, interacts with cdc48.

Its function is as follows. Involved in CDC48-dependent protein degradation through the ubiquitin/proteasome pathway. Involved in delivery of substrates to the 26S proteasome. Also required for membrane fusion and sporulation. The protein is UBX domain-containing protein 3 (ubx3) of Schizosaccharomyces pombe (strain 972 / ATCC 24843) (Fission yeast).